A 134-amino-acid chain; its full sequence is Acyl carrier protein, chloroplastic (134 aa).

A chloroplast-targeting transit peptide spans 1-51 (MSTTFCSSVSMQATSLAATTRISFQKPGLVSRTNLSFNLRRSIPTRLSVSC). A Carrier domain is found at 55 to 130 (PETVEKVSKI…EAAELIEELV (76 aa)). Ser-90 is modified (O-(pantetheine 4'-phosphoryl)serine).

Belongs to the acyl carrier protein (ACP) family. Post-translationally, 4'-phosphopantetheine is transferred from CoA to a specific serine of apo-ACP by acpS. This modification is essential for activity because fatty acids are bound in thioester linkage to the sulfhydryl of the prosthetic group. Seed.

It is found in the plastid. The protein resides in the chloroplast. It participates in lipid metabolism; fatty acid biosynthesis. Carrier of the growing fatty acid chain in fatty acid biosynthesis. In Brassica napus (Rape), this protein is Acyl carrier protein, chloroplastic (ACL1.A2).